The following is a 161-amino-acid chain: Troponin C, slow skeletal and cardiac muscles (161 aa).

At M1 the chain carries N-acetylmethionine. 4 consecutive EF-hand domains span residues 16–51, 52–87, 92–127, and 128–161; these read QKNEFKAAFDIFVLGAEDGCISTKELGKVMRMLGQN, PTPEELQEMIDEVDEDGSGTVDFDEFLVMMVRCMKD, KTEEELSDLFRMFDKNADGYIDLEELKIMLQATGET, and ITEDDIEELMKDGDKNNDGRIDYDEFLEFMKGVE. Ca(2+) is bound by residues D65, D67, S69, T71, E76, D105, N107, D109, Y111, E116, D141, N143, D145, R147, and E152.

It belongs to the troponin C family.

In terms of biological role, troponin is the central regulatory protein of striated muscle contraction. Tn consists of three components: Tn-I which is the inhibitor of actomyosin ATPase, Tn-T which contains the binding site for tropomyosin and Tn-C. The binding of calcium to Tn-C abolishes the inhibitory action of Tn on actin filaments. This Gallus gallus (Chicken) protein is Troponin C, slow skeletal and cardiac muscles (TNNC1).